The chain runs to 383 residues: NifS-like protein (383 aa).

Residues 58 to 59 (SE) and 184 to 186 (SIN) each bind pyridoxal 5'-phosphate.

This sequence belongs to the class-V pyridoxal-phosphate-dependent aminotransferase family. NifS/IscS subfamily. Pyridoxal 5'-phosphate is required as a cofactor.

It localises to the virion. The polypeptide is NifS-like protein (African swine fever virus (strain Badajoz 1971 Vero-adapted) (Ba71V)).